The primary structure comprises 471 residues: MSVLFLLLAITRTASVKAAEGDQAADFLPLCEAWQATKALANAAYKLPPFPPDLTDILNFNITVAPEEWKAIFTDGGSDNTWERFAEGHKNTLNGGNWKTRWEHIKQARQDTKEASSPWNALNSKLINTATVNTTRAYIASIADEAFDLYQGTQTPLQTPKALEAASLAEAAKAILCSDPLKPTADGQACTDITATPSKAATCPTGRSSKGGAPIGLDTVCLCSTNKPSMHSRRRKAAAVMTDGQLKDGILKKLLAACPKKPTLNEPAAAARHAVTVLATRLAQKVARAEEGQIILGTRAETDCASSGSACVEYTNFFKDGDGLAAVPWVKKLLAAADFYDTIEKRKESDKNAATAIAALKSALIREFRRPGQEQTLATTGTKSSSPQSTQQKASEAEANCNDKAKETECNSPCKWDKEEKDEKKRCKLSEEGKQAEKENQEGKDGKANTTGSSNSFVIKTSPLLLAVLLL.

The first 18 residues, 1 to 18 (MSVLFLLLAITRTASVKA), serve as a signal peptide directing secretion. Residues N61 and N133 are each glycosylated (N-linked (GlcNAc...) asparagine). Residues 373-457 (QEQTLATTGT…ANTTGSSNSF (85 aa)) form a disordered region. Low complexity predominate over residues 379 to 392 (TTGTKSSSPQSTQQ). 2 disulfides stabilise this stretch: C401/C414 and C410/C427. The span at 401 to 447 (CNDKAKETECNSPCKWDKEEKDEKKRCKLSEEGKQAEKENQEGKDGK) shows a compositional bias: basic and acidic residues. Polar residues predominate over residues 448–457 (ANTTGSSNSF). N-linked (GlcNAc...) asparagine glycosylation occurs at N449. S454 carries the GPI-anchor amidated serine lipid modification. Positions 455-471 (NSFVIKTSPLLLAVLLL) are cleaved as a propeptide — removed in mature form.

It is found in the cell membrane. VSG forms a coat on the surface of the parasite. The trypanosome evades the immune response of the host by expressing a series of antigenically distinct VSGs from an estimated 1000 VSG genes. The sequence is that of Variant surface glycoprotein WRATAT A from Trypanosoma brucei rhodesiense.